A 597-amino-acid chain; its full sequence is tRNA uridine 5-carboxymethylaminomethyl modification enzyme MnmG (597 aa).

Position 11–16 (11–16 (GAGHAG)) interacts with FAD. An NAD(+)-binding site is contributed by 275–289 (SPRYCPSIEEKIERY).

It belongs to the MnmG family. In terms of assembly, homodimer. Heterotetramer of two MnmE and two MnmG subunits. The cofactor is FAD.

Its subcellular location is the cytoplasm. In terms of biological role, NAD-binding protein involved in the addition of a carboxymethylaminomethyl (cmnm) group at the wobble position (U34) of certain tRNAs, forming tRNA-cmnm(5)s(2)U34. In Endomicrobium trichonymphae, this protein is tRNA uridine 5-carboxymethylaminomethyl modification enzyme MnmG.